A 220-amino-acid polypeptide reads, in one-letter code: Protein DGCR6 (220 aa).

A coiled-coil region spans residues 76–142 (KSLYNQRLRL…EQRAMDQKIV (67 aa)).

The protein belongs to the gonadal family. As to expression, found in all tissues examined with highest expression in liver, heart and skeletal muscle. Lower levels in pancreas and placenta. Weak expression in brain.

It is found in the nucleus. In terms of biological role, may play a role in neural crest cell migration into the third and fourth pharyngeal pouches. This chain is Protein DGCR6 (DGCR6), found in Homo sapiens (Human).